The following is a 194-amino-acid chain: AP-3 complex subunit sigma (194 aa).

The protein belongs to the adaptor complexes small subunit family. Adaptor protein complex 3 (AP-3) is a heterotetramer composed of 2 large adaptins (APL5 and APL6), a medium adaptin (APM3) and a small adaptin (APS3).

Its subcellular location is the golgi apparatus. It is found in the cytoplasmic vesicle membrane. Its function is as follows. Part of the AP-3 complex, an adaptor-related complex which is not clathrin-associated. The complex is associated with the Golgi region as well as more peripheral structures. It facilitates the budding of vesicles from the Golgi membrane and may be directly involved in trafficking to the vacuole. Required for the transport via the ALP pathway, which directs the transport of the cargo proteins PHO8 and VAM3 to the vacuole. The polypeptide is AP-3 complex subunit sigma (APS3) (Saccharomyces cerevisiae (strain ATCC 204508 / S288c) (Baker's yeast)).